A 464-amino-acid chain; its full sequence is Serine carboxypeptidase-like 22 (464 aa).

Positions 1 to 22 (MARTHLLFLLFVLLSLATSSTS) are cleaved as a signal peptide. Asn52, Asn113, and Asn137 each carry an N-linked (GlcNAc...) asparagine glycan. Disulfide bonds link Cys86–Cys346, Cys247–Cys258, and Cys282–Cys314. Ser179 is a catalytic residue. Residues Asn290 and Asn335 are each glycosylated (N-linked (GlcNAc...) asparagine). Catalysis depends on residues Asp385 and His437.

It belongs to the peptidase S10 family. As to expression, expression not detected.

The protein resides in the secreted. In terms of biological role, probable carboxypeptidase. This chain is Serine carboxypeptidase-like 22 (SCPL22), found in Arabidopsis thaliana (Mouse-ear cress).